The primary structure comprises 503 residues: Probable cytosol aminopeptidase (503 aa).

Residues Lys-274 and Asp-279 each contribute to the Mn(2+) site. Residue Lys-286 is part of the active site. Residues Asp-297, Asp-356, and Glu-358 each coordinate Mn(2+). Arg-360 is a catalytic residue.

This sequence belongs to the peptidase M17 family. Mn(2+) serves as cofactor.

It localises to the cytoplasm. It carries out the reaction Release of an N-terminal amino acid, Xaa-|-Yaa-, in which Xaa is preferably Leu, but may be other amino acids including Pro although not Arg or Lys, and Yaa may be Pro. Amino acid amides and methyl esters are also readily hydrolyzed, but rates on arylamides are exceedingly low.. The enzyme catalyses Release of an N-terminal amino acid, preferentially leucine, but not glutamic or aspartic acids.. Presumably involved in the processing and regular turnover of intracellular proteins. Catalyzes the removal of unsubstituted N-terminal amino acids from various peptides. The protein is Probable cytosol aminopeptidase of Burkholderia pseudomallei (strain 1106a).